A 209-amino-acid polypeptide reads, in one-letter code: Thymidylate kinase (209 aa).

10 to 17 (GIDGCGKS) contributes to the ATP binding site.

Belongs to the thymidylate kinase family.

It catalyses the reaction dTMP + ATP = dTDP + ADP. Phosphorylation of dTMP to form dTDP in both de novo and salvage pathways of dTTP synthesis. The chain is Thymidylate kinase from Parasynechococcus marenigrum (strain WH8102).